We begin with the raw amino-acid sequence, 171 residues long: Peptide deformylase (171 aa).

Fe cation is bound by residues cysteine 91 and histidine 133. Glutamate 134 is an active-site residue. Histidine 137 provides a ligand contact to Fe cation.

Belongs to the polypeptide deformylase family. Requires Fe(2+) as cofactor.

The catalysed reaction is N-terminal N-formyl-L-methionyl-[peptide] + H2O = N-terminal L-methionyl-[peptide] + formate. In terms of biological role, removes the formyl group from the N-terminal Met of newly synthesized proteins. Requires at least a dipeptide for an efficient rate of reaction. N-terminal L-methionine is a prerequisite for activity but the enzyme has broad specificity at other positions. This Cronobacter sakazakii (strain ATCC BAA-894) (Enterobacter sakazakii) protein is Peptide deformylase.